The chain runs to 170 residues: MFKILQYPDPRLKTAAQRVEKFDDALQKMIDEMFETHYAATNCAALAATQLDMENPKHITVIDFSPNKDQPLCLVNAEIIERSGEHTEEEGCMSVGGGTFEKVTRAAKIKVRARDRYGKPVEFEADGFMAKCIQHELDHLNGIIFLDRLSTLKRGRIDKRLGKLRRQGKV.

Positions 92 and 135 each coordinate Fe cation. The active site involves Glu-136. His-139 provides a ligand contact to Fe cation.

The protein belongs to the polypeptide deformylase family. The cofactor is Fe(2+).

It carries out the reaction N-terminal N-formyl-L-methionyl-[peptide] + H2O = N-terminal L-methionyl-[peptide] + formate. In terms of biological role, removes the formyl group from the N-terminal Met of newly synthesized proteins. Requires at least a dipeptide for an efficient rate of reaction. N-terminal L-methionine is a prerequisite for activity but the enzyme has broad specificity at other positions. The polypeptide is Peptide deformylase 1 (Coxiella burnetii (strain RSA 493 / Nine Mile phase I)).